A 116-amino-acid polypeptide reads, in one-letter code: NADH-ubiquinone oxidoreductase chain 3 (116 aa).

3 helical membrane passes run leucine 3–phenylalanine 23, phenylalanine 56–leucine 76, and leucine 87–tryptophan 107.

It belongs to the complex I subunit 3 family.

It localises to the mitochondrion membrane. It catalyses the reaction a ubiquinone + NADH + 5 H(+)(in) = a ubiquinol + NAD(+) + 4 H(+)(out). In terms of biological role, core subunit of the mitochondrial membrane respiratory chain NADH dehydrogenase (Complex I) that is believed to belong to the minimal assembly required for catalysis. Complex I functions in the transfer of electrons from NADH to the respiratory chain. The immediate electron acceptor for the enzyme is believed to be ubiquinone. This Oncorhynchus keta (Chum salmon) protein is NADH-ubiquinone oxidoreductase chain 3 (MT-ND3).